Here is a 358-residue protein sequence, read N- to C-terminus: MFEAVEELIGEHTGLEKKLADPSVHADQANARKLNKRYAELTPIVSTYRAWKQTGEDIETAREFAADDPDFAAEVKELEKQREEITEKLRLLLVPRDPSDDKDVLLEIKAGAGGDESALFAGDLLRMYLRYAERVGWKTEIIDSTESELGGYKDVQVAVKTKGGNGATEPGQGVWARMKYEGGVHRVQRVPSTESQGRIHTSAAGVLVTPEAEEVDVEIHANDLRIDVYRSSGPGGQSVNTTDSAVRITHLPTGVVASCQNEKSQLQNKEQAMRILRSRLLAAAQEAAEQEASDVRRSQVRTVDRSEKIRTYNFPENRISDHRVGFKAYNLDQVLDGELDAVIQACVDADSAAKLANA.

An N5-methylglutamine modification is found at Q237.

The protein belongs to the prokaryotic/mitochondrial release factor family. Methylated by PrmC. Methylation increases the termination efficiency of RF1.

Its subcellular location is the cytoplasm. Its function is as follows. Peptide chain release factor 1 directs the termination of translation in response to the peptide chain termination codons UAG and UAA. This chain is Peptide chain release factor 1, found in Streptomyces griseus subsp. griseus (strain JCM 4626 / CBS 651.72 / NBRC 13350 / KCC S-0626 / ISP 5235).